The primary structure comprises 172 residues: Small ribosomal subunit protein uS5 (172 aa).

The region spanning 17–80 (MREKMIAVNR…EEARRKMIKV (64 aa)) is the S5 DRBM domain.

The protein belongs to the universal ribosomal protein uS5 family. As to quaternary structure, part of the 30S ribosomal subunit. Contacts proteins S4 and S8.

Its function is as follows. With S4 and S12 plays an important role in translational accuracy. In terms of biological role, located at the back of the 30S subunit body where it stabilizes the conformation of the head with respect to the body. The sequence is that of Small ribosomal subunit protein uS5 from Janthinobacterium sp. (strain Marseille) (Minibacterium massiliensis).